Consider the following 462-residue polypeptide: Microspherule protein 1 (462 aa).

Methionine 1 bears the N-acetylmethionine mark. The segment at methionine 1–lysine 130 is disordered. Serine 22 bears the Phosphoserine mark. Over residues proline 43–lysine 55 the composition is skewed to basic residues. A compositionally biased stretch (low complexity) spans serine 81–serine 90. Serine 102 is modified (phosphoserine). Threonine 103 carries the post-translational modification Phosphothreonine. Pro residues predominate over residues threonine 103–threonine 112. At serine 108 the chain carries Phosphoserine. The Nuclear localization signal motif lies at proline 113–lysine 123. Residues lysine 123 and lysine 130 each carry the N6-acetyllysine modification. The residue at position 282 (serine 282) is a Phosphoserine. Residues leucine 301–glycine 335 adopt a coiled-coil conformation. The 57-residue stretch at isoleucine 363–valine 419 folds into the FHA domain. Positions arginine 389 to leucine 396 match the UBR5-degron motif.

Component of the chromatin remodeling INO80 complex; specifically part of a complex module associated with the N-terminus of INO80. Component of some MLL1/MLL complex, at least composed of the core components KMT2A/MLL1, ASH2L, HCFC1, WDR5 and RBBP5, as well as the facultative components BACC1, CHD8, E2F6, HSP70, INO80C, KANSL1, LAS1L, MAX, MCRS1, MGA, KAT8/MOF, PELP1, PHF20, PRP31, RING2, RUVB1/TIP49A, RUVB2/TIP49B, SENP3, TAF1, TAF4, TAF6, TAF7, TAF9 and TEX10. Component of the NSL complex at least composed of MOF/KAT8, KANSL1, KANSL2, KANSL3, MCRS1, PHF20, OGT1/OGT, WDR5 and HCFC1. Interacts with NOP2. Interacts with PINX1. Interacts with TERT. Interacts with CCDC85B. Interacts with DAXX. Interacts (via N-terminus) with FMR1 (via phosphorylated form). Interacts with FXR1 and FXR2. Interacts (via C-terminus) with NDE1 (via C-terminus); phosphorylation of NDE1 inhibits the interaction. Interacts (via C-terminus) with ZNF375. Interacts (via C-terminus) with active GTP-bound RHEB (via N-terminus) under conditions of high amino acid concentration; the interaction promotes mTORC1 complex activation by RHEB. Interacts (via N-terminus) with the mTORC1 complex; the interaction ensures mTORC1 activation by RHEB. Interacts with DYNC1I1; the interaction is required for the proper distribution of centriolar satellites. Interacts with TTBK2; the interaction is required for recruitment of TTBK2 to the mother centriole. Interacts with KIF2A; the interaction occurs during mitosis and facilitates chromosome alignment. In terms of processing, ubiquitinated by UBR5 when not assembled in the INO80 complex, leading to its degradation: UBR5 recognizes and binds a degron that is not accessible when MCRS1 is part of the INO80 complex. Phosphorylated by AURKA on Ser-35 and/or Ser-36 during mitosis which is required for kinetochore fiber assembly and mitotic progression but not for spindle localization or for chromosome-induced microtuble aster formation. Also phosphorylated by AURKA on Ser-85 and/or Ser-87. Phosphorylated by TTK/MPS1 which enhances recruitment of KIF2A to the minus end of spindle microtubules and facilitates precise chromosome segregation.

It is found in the nucleus. It localises to the nucleolus. Its subcellular location is the cytoplasm. The protein resides in the cytoskeleton. The protein localises to the microtubule organizing center. It is found in the centrosome. It localises to the spindle pole. Its subcellular location is the chromosome. The protein resides in the centromere. The protein localises to the kinetochore. It is found in the lysosome. It localises to the centriolar satellite. In terms of biological role, modulates the transcription repressor activity of DAXX by recruiting it to the nucleolus. As part of the NSL complex it may be involved in acetylation of nucleosomal histone H4 on several lysine residues. Putative regulatory component of the chromatin remodeling INO80 complex which is involved in transcriptional regulation, DNA replication and probably DNA repair. May also be an inhibitor of TERT telomerase activity. Binds to G-quadruplex structures in mRNA. Binds to RNA homomer poly(G) and poly(U). Maintains RHEB at the lysosome in its active GTP-bound form and prevents its interaction with the mTORC1 complex inhibitor TSC2, ensuring activation of the mTORC1 complex by RHEB. Stabilizes the minus ends of kinetochore fibers by protecting them from depolymerization, ensuring functional spindle assembly during mitosis. Following phosphorylation by TTK/MPS1, enhances recruitment of KIF2A to the minus ends of mitotic spindle microtubules which promotes chromosome alignment. Regulates the morphology of microtubule minus ends in mitotic spindle by maintaining them in a closed conformation characterized by the presence of an electron-dense cap. Regulates G2/M transition and spindle assembly during oocyte meiosis. Mediates histone modifications and transcriptional regulation in germinal vesicle oocytes which are required for meiotic progression. Also regulates microtubule nucleation and spindle assembly by activating aurora kinases during oocyte meiosis. Contributes to the establishment of centriolar satellites and also plays a role in primary cilium formation by recruiting TTBK2 to the mother centriole which is necessary for removal of the CP110 cap from the mother centriole, an early step in ciliogenesis. Required for epiblast development during early embryogenesis. Essential for cell viability. The sequence is that of Microspherule protein 1 (Mcrs1) from Mus musculus (Mouse).